The primary structure comprises 286 residues: 2-hydroxy-6-oxo-6-phenylhexa-2,4-dienoate hydrolase (286 aa).

Residues 42-43 (GG), asparagine 51, asparagine 111, threonine 180, and arginine 190 each bind substrate. Residue histidine 265 is the Proton acceptor of the active site. A substrate-binding site is contributed by tryptophan 266.

This sequence belongs to the AB hydrolase superfamily. BphD family. In terms of assembly, homodimer.

It carries out the reaction 2,6-dioxo-6-phenylhexa-3-enoate + H2O = 2-oxopent-4-enoate + benzoate + H(+). The protein operates within xenobiotic degradation; biphenyl degradation; 2-hydroxy-2,4-pentadienoate and benzoate from biphenyl: step 4/4. Its function is as follows. Catalyzes an unusual C-C bond hydrolysis of 2-hydroxy-6-oxo-6-phenylhexa-2,4-dienoic acid (HOPDA) to produce benzoic acid and 2-hydroxy-2,4-pentadienoic acid (HPD). In Comamonas testosteroni (Pseudomonas testosteroni), this protein is 2-hydroxy-6-oxo-6-phenylhexa-2,4-dienoate hydrolase.